The primary structure comprises 448 residues: Glutamyl-tRNA reductase (448 aa).

Substrate-binding positions include 49–52 (TCNR), Ser109, 114–116 (ETQ), and Gln120. Cys50 (nucleophile) is an active-site residue. 189–194 (GAGEMS) is an NADP(+) binding site.

The protein belongs to the glutamyl-tRNA reductase family. In terms of assembly, homodimer.

It carries out the reaction (S)-4-amino-5-oxopentanoate + tRNA(Glu) + NADP(+) = L-glutamyl-tRNA(Glu) + NADPH + H(+). Its pathway is porphyrin-containing compound metabolism; protoporphyrin-IX biosynthesis; 5-aminolevulinate from L-glutamyl-tRNA(Glu): step 1/2. Its function is as follows. Catalyzes the NADPH-dependent reduction of glutamyl-tRNA(Glu) to glutamate 1-semialdehyde (GSA). The chain is Glutamyl-tRNA reductase from Staphylococcus haemolyticus (strain JCSC1435).